A 197-amino-acid chain; its full sequence is dITP/XTP pyrophosphatase (197 aa).

Residue 8-13 (TGNAGK) participates in substrate binding. The Mg(2+) site is built by glutamate 40 and aspartate 69. Aspartate 69 functions as the Proton acceptor in the catalytic mechanism. Substrate is bound by residues serine 70, 154–157 (FGYD), lysine 177, and 182–183 (HR).

It belongs to the HAM1 NTPase family. In terms of assembly, homodimer. Mg(2+) is required as a cofactor.

The catalysed reaction is XTP + H2O = XMP + diphosphate + H(+). It carries out the reaction dITP + H2O = dIMP + diphosphate + H(+). The enzyme catalyses ITP + H2O = IMP + diphosphate + H(+). Functionally, pyrophosphatase that catalyzes the hydrolysis of nucleoside triphosphates to their monophosphate derivatives, with a high preference for the non-canonical purine nucleotides XTP (xanthosine triphosphate), dITP (deoxyinosine triphosphate) and ITP. Seems to function as a house-cleaning enzyme that removes non-canonical purine nucleotides from the nucleotide pool, thus preventing their incorporation into DNA/RNA and avoiding chromosomal lesions. The chain is dITP/XTP pyrophosphatase (rdgB) from Shigella flexneri.